We begin with the raw amino-acid sequence, 449 residues long: MSPESKKLFNIIILGVAFMFMFTAFQTCGNVAQTVIRSLNSTDFHGSGYTSMAIIYGVFSASNLITPSVVAIVGPQLSMFASGLFYSMYIAVFIQPFPWSFYTASVFIGIAAAVLWTAQGNCLTINSDEHTIGRNSGIFWALLQSSLFFGNLYIYFAWQGKTQISESDRRTVFIALTVISLVGTVLFFLIRKPDSENVLGEDESSDDQDMEVNESAQNNLTKAVDAFKKSFKLCVTKEMLLLSITTAYTGLELTFFSGVYGTCIGAINKFGAEEKSLIGLSGIFIGIGEILGGSLFGLLSKNNRFGRNPVVLLGILVHFIAFYLIFLNMPGDAPIAPVKGTDSSAYIKSSKEVAILCSFLLGLGDSCFNTQLLSILGFLYSEDSAPAFAIFKFVQSICAAVAFFYSNYLLLHWQLLVMVIFGFFGTISFFTVEWEAAAFVARGSDYRSI.

The helical transmembrane segment at 8–28 (LFNIIILGVAFMFMFTAFQTC) threads the bilayer. Asn-40 carries an N-linked (GlcNAc...) asparagine glycan. 5 helical membrane passes run 53 to 73 (AIIY…VAIV), 74 to 94 (GPQL…AVFI), 96 to 116 (PFPW…AVLW), 138 to 158 (IFWA…YFAW), and 170 to 190 (RTVF…FFLI). A Phosphoserine modification is found at Ser-204. The next 6 membrane-spanning stretches (helical) occupy residues 239-259 (MLLL…FSGV), 277-297 (LIGL…SLFG), 309-329 (PVVL…FLNM), 359-379 (FLLG…LGFL), 385-405 (APAF…AFFY), and 410-430 (LLHW…ISFF).

It belongs to the unc-93 family.

It is found in the membrane. This is UNC93-like protein MFSD11 (MFSD11) from Macaca fascicularis (Crab-eating macaque).